The sequence spans 620 residues: Chaperone protein HscA homolog (620 aa).

The protein belongs to the heat shock protein 70 family.

Its function is as follows. Chaperone involved in the maturation of iron-sulfur cluster-containing proteins. Has a low intrinsic ATPase activity which is markedly stimulated by HscB. The polypeptide is Chaperone protein HscA homolog (Shewanella piezotolerans (strain WP3 / JCM 13877)).